The sequence spans 200 residues: Recoverin (200 aa).

A lipid anchor (N-myristoyl glycine) is attached at G2. 4 EF-hand domains span residues 25-60 (EEEL…FPDT), 61-96 (DPKA…TTAG), 97-132 (KTNQ…IFKM), and 147-182 (TPEK…NKEI). Cysteine sulfenic acid (-SOH) is present on C39. Ca(2+) contacts are provided by D74, N76, D78, T80, E85, D110, D112, N114, T116, and E121. Residues 189–192 (EPQK) are interaction with GRK1.

Belongs to the recoverin family. Homodimer; disulfide-linked. Homodimerization is caused by prolonged intense illumination. May form a complex composed of RHO, GRK1 and RCVRN in a Ca(2+)-dependent manner; RCVRN prevents the interaction between GRK1 and RHO. Interacts (via C-terminus) with GRK1 (via N-terminus); the interaction is Ca(2+)-dependent. The N-terminal glycine is linked to one of four different types of acyl groups. The most abundant is myristoleate (14:1), but 14:0, 14:2, and 12:0 acyl residues are also present. The Ca(2+) induced exposure of the myristoyl group, known as the calcium-myristoyl switch, promotes RCVRN binding to the photoreceptor cell membranes only when intracellular Ca(2+) concentration is high. In terms of processing, oxidation on Cys-39 occurs in response to prolonged intense illumination and results in the formation of disulfide homodimers, and to a lesser extent disulfide-linked heterodimers. As to expression, retina and pineal gland.

The protein resides in the photoreceptor inner segment. It is found in the cell projection. The protein localises to the cilium. It localises to the photoreceptor outer segment. Its subcellular location is the photoreceptor outer segment membrane. The protein resides in the perikaryon. Acts as a calcium sensor and regulates phototransduction of cone and rod photoreceptor cells. Modulates light sensitivity of cone photoreceptor in dark and dim conditions. In response to high Ca(2+) levels induced by low light levels, prolongs RHO/rhodopsin activation in rod photoreceptor cells by binding to and inhibiting GRK1-mediated phosphorylation of RHO/rhodopsin. Plays a role in scotopic vision/enhances vision in dim light by enhancing signal transfer between rod photoreceptors and rod bipolar cells. Improves rod photoreceptor sensitivity in dim light and mediates response of rod photoreceptors to facilitate detection of change and motion in bright light. In Homo sapiens (Human), this protein is Recoverin (RCVRN).